Here is a 1374-residue protein sequence, read N- to C-terminus: DNA-directed RNA polymerase subunit beta' (1374 aa).

The tract at residues 1–47 (MTSTSPKSRKPSTKTTKSKSKSKSKSKAAKAAAAGASPALARTPPQF) is disordered. Residues 7 to 28 (KSRKPSTKTTKSKSKSKSKSKA) are compositionally biased toward basic residues. The segment covering 29 to 39 (AKAAAAGASPA) has biased composition (low complexity). Zn(2+) is bound by residues Cys258, Cys325, Cys332, and Cys335. Residues 1344–1374 (RPTGENELEEEQLPDPSALEGLQQEGLLTEE) form a disordered region. The segment covering 1362–1374 (LEGLQQEGLLTEE) has biased composition (low complexity).

This sequence belongs to the RNA polymerase beta' chain family. RpoC2 subfamily. In cyanobacteria the RNAP catalytic core is composed of 2 alpha, 1 beta, 1 beta', 1 gamma and 1 omega subunit. When a sigma factor is associated with the core the holoenzyme is formed, which can initiate transcription. Zn(2+) serves as cofactor.

The enzyme catalyses RNA(n) + a ribonucleoside 5'-triphosphate = RNA(n+1) + diphosphate. Its function is as follows. DNA-dependent RNA polymerase catalyzes the transcription of DNA into RNA using the four ribonucleoside triphosphates as substrates. The protein is DNA-directed RNA polymerase subunit beta' of Prochlorococcus marinus (strain MIT 9313).